The following is a 362-amino-acid chain: Prostaglandin F2-alpha receptor (362 aa).

Over 1–31 (MSTNSSIQPVSPESELLSNTTCQLEEDLSIS) the chain is Extracellular. N-linked (GlcNAc...) asparagine glycosylation is found at Asn-4 and Asn-19. The helical transmembrane segment at 32-54 (FSIIFMTVGILSNSLAIAILMKA) threads the bilayer. The Cytoplasmic portion of the chain corresponds to 55–69 (YQRFRQKYKSSFLLL). Residues 70-90 (ASALVITDFFGHLINGTIAVF) form a helical membrane-spanning segment. The Extracellular portion of the chain corresponds to 91–109 (VYASDKDWIYFDKSNILCS). A disulfide bridge links Cys-108 with Cys-186. The helical transmembrane segment at 110–131 (IFGICMVFSGLCPLFLGSLMAI) threads the bilayer. Over 132–152 (ERCIGVTKPIFHSTKITTKHV) the chain is Cytoplasmic. A helical transmembrane segment spans residues 153 to 175 (KMMLSGVCFFAVFVALLPILGHR). The Extracellular segment spans residues 176 to 198 (DYKIQASRTWCFYKTDEIKDWED). The helical transmembrane segment at 199–224 (RFYLLLFAFLGLLALGISFVCNAITG) threads the bilayer. The Cytoplasmic portion of the chain corresponds to 225–250 (ISLLKVKFRSQQHRQGRSHHFEMVIQ). The helical transmembrane segment at 251–267 (LLGIMCVSCICWSPFLV) threads the bilayer. The Extracellular segment spans residues 268-285 (TMASIGMNIQDFKDSCER). A helical transmembrane segment spans residues 286–307 (TLFTLRMATWNQILDPWVYILL). Topologically, residues 308-362 (RKAVLRNLYVCTRRCCGVHVISLHVWELSSIKDSLKVAAISDLPVTEKVTQQTST) are cytoplasmic.

Belongs to the G-protein coupled receptor 1 family.

The protein resides in the cell membrane. Functionally, receptor for prostaglandin F2-alpha (PGF2-alpha). The activity of this receptor is mediated by G proteins which activate a phosphatidylinositol-calcium second messenger system. Initiates luteolysis in the corpus luteum. This is Prostaglandin F2-alpha receptor (PTGFR) from Bos taurus (Bovine).